A 287-amino-acid chain; its full sequence is Small ribosomal subunit protein uS10m (287 aa).

The transit peptide at 1–33 (MSLFSPHRILLRTGSAFQLATATRALLSTSSQL) directs the protein to the mitochondrion. Over residues 33–43 (LRNTKNAQSGL) the composition is skewed to polar residues. The segment at 33 to 84 (LRNTKNAQSGLAEQARAEEPVASSPSQTTRPEQKSLEEETTKQTQTHADSTV) is disordered. Residues 63 to 73 (PEQKSLEEETT) are compositionally biased toward basic and acidic residues. Residues 74–84 (KQTQTHADSTV) are compositionally biased toward polar residues.

This sequence belongs to the universal ribosomal protein uS10 family. As to quaternary structure, part of the mitochondrial small ribosomal subunit.

The protein localises to the mitochondrion. Functionally, involved in mitochondrial genome encoded proteins translation. Involved in the binding of tRNA to the ribosomes. The chain is Small ribosomal subunit protein uS10m (rsm10) from Emericella nidulans (strain FGSC A4 / ATCC 38163 / CBS 112.46 / NRRL 194 / M139) (Aspergillus nidulans).